The primary structure comprises 91 residues: Small ribosomal subunit protein uS19m (91 aa).

The protein belongs to the universal ribosomal protein uS19 family. In terms of assembly, component of the mitochondrial small ribosomal subunit (mt-SSU). Mature N.crassa 74S mitochondrial ribosomes consist of a small (37S) and a large (54S) subunit. The 37S small subunit contains a 16S ribosomal RNA (16S mt-rRNA) and 32 different proteins. The 54S large subunit contains a 23S rRNA (23S mt-rRNA) and 42 different proteins.

It localises to the mitochondrion. In terms of biological role, component of the mitochondrial ribosome (mitoribosome), a dedicated translation machinery responsible for the synthesis of mitochondrial genome-encoded proteins, including at least some of the essential transmembrane subunits of the mitochondrial respiratory chain. The mitoribosomes are attached to the mitochondrial inner membrane and translation products are cotranslationally integrated into the membrane. The chain is Small ribosomal subunit protein uS19m (rsm19) from Neurospora crassa (strain ATCC 24698 / 74-OR23-1A / CBS 708.71 / DSM 1257 / FGSC 987).